We begin with the raw amino-acid sequence, 146 residues long: UPF0178 protein Lin1493 (146 aa).

The protein belongs to the UPF0178 family.

This chain is UPF0178 protein Lin1493, found in Listeria innocua serovar 6a (strain ATCC BAA-680 / CLIP 11262).